Reading from the N-terminus, the 229-residue chain is Protein fmp52-2, mitochondrial (229 aa).

The N-terminal 45 residues, 1–45 (MTTAAVFGSTGAVGGQILATLLASDAFSSVKTVSRRLPNAQSPKL), are a transit peptide targeting the mitochondrion.

The protein belongs to the FMP52 family.

Its subcellular location is the mitochondrion outer membrane. The protein is Protein fmp52-2, mitochondrial (fmp522) of Aspergillus oryzae (strain ATCC 42149 / RIB 40) (Yellow koji mold).